The following is a 323-amino-acid chain: Peroxisomal targeting signal 2 receptor (323 aa).

6 WD repeats span residues D65–D96, E109–D141, G153–D184, A196–D227, G240–N271, and H284–D315.

Belongs to the WD repeat peroxin-7 family. In terms of assembly, interacts with PEX5; interaction only takes place when PEX7 is associated with cargo proteins. Interacts with VWA8. As to expression, ubiquitous. Highest expression in pancreas, skeletal muscle and heart.

It localises to the cytoplasm. Its subcellular location is the cytosol. The protein localises to the peroxisome matrix. Functionally, receptor required for the peroxisomal import of proteins containing a C-terminal PTS2-type peroxisomal targeting signal. Specifically binds to cargo proteins containing a PTS2 peroxisomal targeting signal in the cytosol. Cargo protein-binding triggers interaction with PEX5 and formation of a ternary complex composed of PEX5 and PEX7 along with PTS2-containing cargo proteins, which is tranlocated into peroxisomes by passing through the PEX13-PEX14 docking complex. The chain is Peroxisomal targeting signal 2 receptor from Homo sapiens (Human).